Here is a 437-residue protein sequence, read N- to C-terminus: UDP-N-acetylmuramate--L-alanine ligase (437 aa).

108–114 (GAHGKTS) is an ATP binding site.

This sequence belongs to the MurCDEF family.

Its subcellular location is the cytoplasm. It carries out the reaction UDP-N-acetyl-alpha-D-muramate + L-alanine + ATP = UDP-N-acetyl-alpha-D-muramoyl-L-alanine + ADP + phosphate + H(+). Its pathway is cell wall biogenesis; peptidoglycan biosynthesis. Functionally, cell wall formation. The chain is UDP-N-acetylmuramate--L-alanine ligase from Staphylococcus epidermidis (strain ATCC 12228 / FDA PCI 1200).